The chain runs to 196 residues: uncharacterized protein (196 aa).

The helical transmembrane segment at 26–46 threads the bilayer; sequence ITFFFILLICFICILLLLAIF.

It localises to the membrane. This is an uncharacterized protein from Mus musculus (Mouse).